A 344-amino-acid chain; its full sequence is 3-dehydroquinate synthase (344 aa).

NAD(+) contacts are provided by residues 60–65 (DGEEYK), 94–98 (GVISD), 118–119 (TT), lysine 131, lysine 140, and 158–161 (FLNT). Positions 173, 232, and 249 each coordinate Zn(2+).

It belongs to the sugar phosphate cyclases superfamily. Dehydroquinate synthase family. Requires Co(2+) as cofactor. Zn(2+) serves as cofactor. The cofactor is NAD(+).

The protein localises to the cytoplasm. The enzyme catalyses 7-phospho-2-dehydro-3-deoxy-D-arabino-heptonate = 3-dehydroquinate + phosphate. The protein operates within metabolic intermediate biosynthesis; chorismate biosynthesis; chorismate from D-erythrose 4-phosphate and phosphoenolpyruvate: step 2/7. In terms of biological role, catalyzes the conversion of 3-deoxy-D-arabino-heptulosonate 7-phosphate (DAHP) to dehydroquinate (DHQ). The polypeptide is 3-dehydroquinate synthase (Campylobacter hominis (strain ATCC BAA-381 / DSM 21671 / CCUG 45161 / LMG 19568 / NCTC 13146 / CH001A)).